Reading from the N-terminus, the 141-residue chain is Neuropeptides CP2 (141 aa).

The first 26 residues, 1–26 (MDSRICTSFARLMASALCVSTLLVTA), serve as a signal peptide directing secretion. The segment at 75–94 (KVDMPLPRQRTSSRSSERWA) is disordered. At H140 the chain carries Histidine amide.

As to expression, neurons.

It is found in the secreted. Mediates intrinsic neuromodulation. The polypeptide is Neuropeptides CP2 (CP2PP) (Aplysia californica (California sea hare)).